Reading from the N-terminus, the 452-residue chain is Imaginal disk growth factor 6 (452 aa).

The N-terminal stretch at 1 to 18 (MIIKALAIVSLCLASIQA) is a signal peptide. In terms of domain architecture, GH18 spans 29–452 (KHLVCYYDSA…LRAIKYRLTN (424 aa)). A disulfide bond links Cys-33 and Cys-60. Asn-233 carries an N-linked (GlcNAc...) asparagine glycan. Cys-352 and Cys-435 are joined by a disulfide.

The protein belongs to the glycosyl hydrolase 18 family. IDGF subfamily. In terms of processing, glycosylated. As to expression, in larvae, it is expressed in the fat body and by hemocytes.

Its subcellular location is the secreted. Functionally, probably required to stimulate the proliferation, polarization and motility of imaginal disk cells. May act by stabilizing the binding of insulin-like peptides to its receptor through a simultaneous interaction with both molecules to form a multiprotein signaling complex. This chain is Imaginal disk growth factor 6, found in Drosophila melanogaster (Fruit fly).